We begin with the raw amino-acid sequence, 127 residues long: Thioredoxin domain-containing protein 8 (127 aa).

Residues 1–92 (MVQIIKDTNE…SQKVTLFSRI (92 aa)) form the Thioredoxin domain. The cysteines at positions 32 and 35 are disulfide-linked.

Belongs to the thioredoxin family. Testis-specific. Only expressed during spermiogenesis, prominently in the Golgi apparatus of pachytene spermatocytes and round and elongated spermatids, with a transient localization in the developing acrosome of round spermatids (at protein level).

It localises to the cytoplasm. The protein resides in the golgi apparatus. May be required for post-translational modifications of proteins required for acrosomal biogenesis. May act by reducing disulfide bonds within the sperm. In Homo sapiens (Human), this protein is Thioredoxin domain-containing protein 8 (TXNDC8).